Consider the following 137-residue polypeptide: Pro-corazonin (137 aa).

A signal peptide spans 1–20; the sequence is MKHVFSTSLIVSLFVIFTDA. Glutamine 21 carries the post-translational modification Pyrrolidone carboxylic acid. Residue asparagine 31 is modified to Asparagine amide. A propeptide spanning residues 68–137 is cleaved from the precursor; it reads FLKSPCDVRL…RLLNDGMHRL (70 aa).

This sequence belongs to the corazonin family.

Its subcellular location is the secreted. Cardioactive peptide. Corazonin is probably involved in the physiological regulation of the heart beat. The protein is Pro-corazonin of Aedes aegypti (Yellowfever mosquito).